A 752-amino-acid chain; its full sequence is Probable beta-glucosidase D (752 aa).

Positions 1–18 are cleaved as a signal peptide; it reads MRFVSLAVGAALLGAAGA. Asparagine 187 and asparagine 237 each carry an N-linked (GlcNAc...) asparagine glycan. The active site involves aspartate 265. N-linked (GlcNAc...) asparagine glycosylation is found at asparagine 299, asparagine 343, asparagine 441, asparagine 510, asparagine 532, asparagine 571, asparagine 586, asparagine 638, asparagine 661, and asparagine 743.

This sequence belongs to the glycosyl hydrolase 3 family.

It is found in the secreted. It catalyses the reaction Hydrolysis of terminal, non-reducing beta-D-glucosyl residues with release of beta-D-glucose.. It functions in the pathway glycan metabolism; cellulose degradation. Beta-glucosidases are one of a number of cellulolytic enzymes involved in the degradation of cellulosic biomass. Catalyzes the last step releasing glucose from the inhibitory cellobiose. In Aspergillus flavus (strain ATCC 200026 / FGSC A1120 / IAM 13836 / NRRL 3357 / JCM 12722 / SRRC 167), this protein is Probable beta-glucosidase D (bglD).